Reading from the N-terminus, the 490-residue chain is Pyridine nucleotide-disulfide oxidoreductase domain-containing protein 1 (490 aa).

The protein belongs to the class-I pyridine nucleotide-disulfide oxidoreductase family. PYROXD1 subfamily. The cofactor is FAD.

The protein localises to the nucleus. It is found in the cytoplasm. Its subcellular location is the myofibril. It localises to the sarcomere. In terms of biological role, probable FAD-dependent oxidoreductase; involved in the cellular oxidative stress response. Required for normal sarcomere structure and muscle fiber integrity. This Danio rerio (Zebrafish) protein is Pyridine nucleotide-disulfide oxidoreductase domain-containing protein 1 (pyroxd1).